We begin with the raw amino-acid sequence, 258 residues long: Hemin import ATP-binding protein HmuV (258 aa).

Residues 2 to 242 (LTAEKLCVER…SKIEELYDFP (241 aa)) form the ABC transporter domain. 34-41 (GANGAGKS) provides a ligand contact to ATP.

The protein belongs to the ABC transporter superfamily. Heme (hemin) importer (TC 3.A.1.14.5) family. The complex is composed of two ATP-binding proteins (HmuV), two transmembrane proteins (HmuU) and a solute-binding protein (HmuT).

The protein resides in the cell inner membrane. Part of the ABC transporter complex HmuTUV involved in hemin import. Responsible for energy coupling to the transport system. This is Hemin import ATP-binding protein HmuV from Hydrogenovibrio crunogenus (strain DSM 25203 / XCL-2) (Thiomicrospira crunogena).